A 278-amino-acid polypeptide reads, in one-letter code: 3-methyl-2-oxobutanoate hydroxymethyltransferase (278 aa).

D43 and D82 together coordinate Mg(2+). Residues 43-44 (DS), D82, and K112 each bind 3-methyl-2-oxobutanoate. Residue E114 participates in Mg(2+) binding. The active-site Proton acceptor is the E181.

It belongs to the PanB family. Homodecamer; pentamer of dimers. The cofactor is Mg(2+).

It is found in the cytoplasm. The enzyme catalyses 3-methyl-2-oxobutanoate + (6R)-5,10-methylene-5,6,7,8-tetrahydrofolate + H2O = 2-dehydropantoate + (6S)-5,6,7,8-tetrahydrofolate. It participates in cofactor biosynthesis; (R)-pantothenate biosynthesis; (R)-pantoate from 3-methyl-2-oxobutanoate: step 1/2. Its function is as follows. Catalyzes the reversible reaction in which hydroxymethyl group from 5,10-methylenetetrahydrofolate is transferred onto alpha-ketoisovalerate to form ketopantoate. The protein is 3-methyl-2-oxobutanoate hydroxymethyltransferase of Bacillus cereus (strain AH187).